The sequence spans 310 residues: Membrane protein insertase YidC 2 (310 aa).

The first 23 residues, 1–23 (MKKIYKRLLFSGLALSMLFFLSG), serve as a signal peptide directing secretion. Cys24 carries the N-palmitoyl cysteine lipid modification. Cys24 is lipidated: S-diacylglycerol cysteine. The next 5 membrane-spanning stretches (helical) occupy residues 34–54 (GEGW…QYLA), 57–77 (LGLG…LLIL), 136–156 (FGGL…ALYI), 180–200 (IITV…TLSV), and 220–240 (VMIS…SGIF). A disordered region spans residues 263 to 310 (EFKKNPPKPFKSNARKDITPQANNDKKLITSKKQKSNRNAGKQRHHKQ). Basic and acidic residues predominate over residues 276-290 (ARKDITPQANNDKKL). The segment covering 291–310 (ITSKKQKSNRNAGKQRHHKQ) has biased composition (basic residues).

Belongs to the OXA1/ALB3/YidC family. Type 2 subfamily.

The protein localises to the cell membrane. In terms of biological role, required for the insertion and/or proper folding and/or complex formation of integral membrane proteins into the membrane. Involved in integration of membrane proteins that insert both dependently and independently of the Sec translocase complex, as well as at least some lipoproteins. Partially complements an E.coli yidC depletion experiment. The chain is Membrane protein insertase YidC 2 (yidC2) from Streptococcus mutans serotype c (strain ATCC 700610 / UA159).